The sequence spans 305 residues: Transcription factor MYB87 (305 aa).

2 HTH myb-type domains span residues 9–66 (KMAV…RPNL) and 67–117 (KHGG…KKKL). 2 DNA-binding regions (H-T-H motif) span residues 38–62 (WISL…LNYL) and 90–113 (WSII…NTRL).

In terms of tissue distribution, expressed in roots, leaves, internodes, shoot tips and flowers.

It localises to the nucleus. Transcription factor that functions as a regulator of genes affecting cell wall organization and remodeling. Activates genes related to the primary cell wall and represses genes related to the secondary cell wall and expansins. Required for the regulation of longitudinal cell growth in stems, leaves, petioles, roots, flowers and siliques. The polypeptide is Transcription factor MYB87 (Arabidopsis thaliana (Mouse-ear cress)).